A 249-amino-acid polypeptide reads, in one-letter code: Cyclic AMP-responsive element-binding protein (249 aa).

In terms of domain architecture, KID spans Ile-35 to Glu-94. The tract at residues Asp-73 to Asn-106 is disordered. The span at Gly-90–Asn-100 shows a compositional bias: low complexity. The region spanning Thr-191–Asp-249 is the bZIP domain. Residues Arg-192–Lys-217 form a basic motif region. Residues Leu-219–Leu-240 form a leucine-zipper region.

The protein belongs to the bZIP family. As to quaternary structure, binds DNA as a dimer.

The protein resides in the nucleus. This protein binds the cAMP response element (CRE), sequence present in many viral and cellular promoters. Could regulate the transcriptional activity of genes involved in regeneration processes. The polypeptide is Cyclic AMP-responsive element-binding protein (CREB) (Hydra viridissima (Green hydra)).